The sequence spans 164 residues: uncharacterized protein (164 aa).

This is an uncharacterized protein from Methanocaldococcus jannaschii (strain ATCC 43067 / DSM 2661 / JAL-1 / JCM 10045 / NBRC 100440) (Methanococcus jannaschii).